The chain runs to 63 residues: SPbeta prophage-derived uncharacterized protein YotC (63 aa).

The polypeptide is SPbeta prophage-derived uncharacterized protein YotC (yotC) (Bacillus subtilis (strain 168)).